The chain runs to 219 residues: Large ribosomal subunit protein uL16 (219 aa).

This sequence belongs to the universal ribosomal protein uL16 family. As to quaternary structure, component of the large ribosomal subunit. Mature ribosomes consist of a small (40S) and a large (60S) subunit. The 40S subunit contains about 33 different proteins and 1 molecule of RNA (18S). The 60S subunit contains about 49 different proteins and 3 molecules of RNA (28S, 5.8S and 5S).

The protein is Large ribosomal subunit protein uL16 (RpL10) of Bombyx mandarina (Wild silk moth).